Consider the following 243-residue polypeptide: Ribonuclease HII (243 aa).

In terms of domain architecture, RNase H type-2 spans serine 23–proline 217. 3 residues coordinate a divalent metal cation: aspartate 29, glutamate 30, and aspartate 122. Residues leucine 223 to aspartate 243 form a disordered region. Positions valine 232–aspartate 243 are enriched in basic and acidic residues.

It belongs to the RNase HII family. Requires Mn(2+) as cofactor. The cofactor is Mg(2+).

The protein resides in the cytoplasm. The enzyme catalyses Endonucleolytic cleavage to 5'-phosphomonoester.. Functionally, endonuclease that specifically degrades the RNA of RNA-DNA hybrids. This chain is Ribonuclease HII, found in Anaplasma marginale (strain St. Maries).